The chain runs to 167 residues: NAD(P)H-quinone oxidoreductase subunit I, chloroplastic (167 aa).

4Fe-4S ferredoxin-type domains lie at 55 to 84 (GRIH…VDWK) and 95 to 124 (LNYS…MTEE). Residues Cys-64, Cys-67, Cys-70, Cys-74, Cys-104, Cys-107, Cys-110, and Cys-114 each coordinate [4Fe-4S] cluster.

It belongs to the complex I 23 kDa subunit family. NDH is composed of at least 16 different subunits, 5 of which are encoded in the nucleus. [4Fe-4S] cluster serves as cofactor.

It localises to the plastid. The protein resides in the chloroplast thylakoid membrane. The catalysed reaction is a plastoquinone + NADH + (n+1) H(+)(in) = a plastoquinol + NAD(+) + n H(+)(out). It catalyses the reaction a plastoquinone + NADPH + (n+1) H(+)(in) = a plastoquinol + NADP(+) + n H(+)(out). In terms of biological role, NDH shuttles electrons from NAD(P)H:plastoquinone, via FMN and iron-sulfur (Fe-S) centers, to quinones in the photosynthetic chain and possibly in a chloroplast respiratory chain. The immediate electron acceptor for the enzyme in this species is believed to be plastoquinone. Couples the redox reaction to proton translocation, and thus conserves the redox energy in a proton gradient. The protein is NAD(P)H-quinone oxidoreductase subunit I, chloroplastic of Eucalyptus globulus subsp. globulus (Tasmanian blue gum).